A 282-amino-acid chain; its full sequence is MPVSRFAVFGHPIAHSLSPRIHTEFGRQMGVALNYLAFDVAPDAFRVSLERFVAEGGCGANVTLPLKEAAFEVCTTLSARARRAGAVNTLSRVDGVWHGENTDGTGLVRNLTERHGLDLRGRRALLLGAGGAARGVAPALLDAGITEMVIVNRSPERADMLCDALGEPGRVSARYWGDLGDLGNFELIVNATSIGNTSDMRTFSLPRSLLDSMTAAVDLNYGSAAVPFLAWAHAVETRYVIDGLGMLVEQAAESFSLWHGRRPDTDPVYTVLHSEYGAPGRS.

Shikimate contacts are provided by residues 16–18 (SLS) and Thr63. Lys67 acts as the Proton acceptor in catalysis. Shikimate contacts are provided by Asn88 and Asp103. NADP(+)-binding positions include 128–132 (GAGGA) and Gly243.

This sequence belongs to the shikimate dehydrogenase family. Homodimer.

The enzyme catalyses shikimate + NADP(+) = 3-dehydroshikimate + NADPH + H(+). The protein operates within metabolic intermediate biosynthesis; chorismate biosynthesis; chorismate from D-erythrose 4-phosphate and phosphoenolpyruvate: step 4/7. Involved in the biosynthesis of the chorismate, which leads to the biosynthesis of aromatic amino acids. Catalyzes the reversible NADPH linked reduction of 3-dehydroshikimate (DHSA) to yield shikimate (SA). In Xylella fastidiosa (strain 9a5c), this protein is Shikimate dehydrogenase (NADP(+)).